Here is a 267-residue protein sequence, read N- to C-terminus: 3-methyl-2-oxobutanoate hydroxymethyltransferase (267 aa).

Mg(2+) is bound by residues D45 and D84. Residues 45-46 (DS), D84, and K113 contribute to the 3-methyl-2-oxobutanoate site. Residue E115 coordinates Mg(2+). E182 acts as the Proton acceptor in catalysis.

It belongs to the PanB family. As to quaternary structure, homodecamer; pentamer of dimers. Mg(2+) serves as cofactor.

It localises to the cytoplasm. The enzyme catalyses 3-methyl-2-oxobutanoate + (6R)-5,10-methylene-5,6,7,8-tetrahydrofolate + H2O = 2-dehydropantoate + (6S)-5,6,7,8-tetrahydrofolate. It functions in the pathway cofactor biosynthesis; coenzyme A biosynthesis. Functionally, catalyzes the reversible reaction in which hydroxymethyl group from 5,10-methylenetetrahydrofolate is transferred onto alpha-ketoisovalerate to form ketopantoate. This is 3-methyl-2-oxobutanoate hydroxymethyltransferase from Saccharolobus islandicus (strain Y.N.15.51 / Yellowstone #2) (Sulfolobus islandicus).